Reading from the N-terminus, the 236-residue chain is Small ribosomal subunit protein uS3c (236 aa).

In terms of domain architecture, KH type-2 spans 47 to 127; the sequence is VRKYVRSSSR…KLNMTLSQVA (81 aa).

This sequence belongs to the universal ribosomal protein uS3 family. In terms of assembly, part of the 30S ribosomal subunit.

It is found in the plastid. The protein resides in the chloroplast. This Zygnema circumcarinatum (Green alga) protein is Small ribosomal subunit protein uS3c (rps3).